Here is a 316-residue protein sequence, read N- to C-terminus: Epoxide hydrolase 2 (316 aa).

The AB hydrolase-1 domain occupies 25–302 (PAVLFLHGFP…AAHFINQERP (278 aa)). The active-site Nucleophile is Asp101. Tyr150 contacts an epoxide. Tyr230 acts as the Proton donor in catalysis. The active-site Proton acceptor is the His295.

It belongs to the AB hydrolase superfamily. Epoxide hydrolase family. Homodimer. As to expression, highly expressed in young fruits 15 days after anthesis (15-DAA). Also observed in stems and leaves.

It catalyses the reaction an epoxide + H2O = an ethanediol. It carries out the reaction (24S)-24,25-epoxycucurbitadienol + H2O = (24R)-24,25-dihydroxycucurbitadienol. Its pathway is secondary metabolite biosynthesis; terpenoid biosynthesis. In terms of biological role, epoxide hydrolase involved in the biosynthesis of cucurbitacin and mogroside tetracyclic triterpene natural products (e.g. siamenoside I and mogrosides IV, V and VI). Cucurbitacins have cytotoxic properties and exhibit deterrent taste as a defense barrier against herbivores. Mogrosides are nonsugar highly oxygenated compounds used as high-intensity zero-calorie sweeteners; they also possess pharmacological properties such as regulating immunity, lowering blood sugar and lipid levels, protecting the liver, and acting as antioxidants and antitumor agents. Catalyzes the hydrolysis of aromatic epoxide-containing substrates, such as the conversion of 24,25-epoxycucurbitadienol to 24,25-dihydroxycucurbitadienol. This chain is Epoxide hydrolase 2, found in Siraitia grosvenorii (Monk's fruit).